The chain runs to 487 residues: Probable cytochrome P450 313a5 (487 aa).

The residue at position 223 (Tyr223) is a Phosphotyrosine. Cys433 contributes to the heme binding site.

It belongs to the cytochrome P450 family. Heme serves as cofactor.

The protein localises to the endoplasmic reticulum membrane. The protein resides in the microsome membrane. Functionally, may be involved in the metabolism of insect hormones and in the breakdown of synthetic insecticides. The polypeptide is Probable cytochrome P450 313a5 (Cyp313a5) (Drosophila melanogaster (Fruit fly)).